A 110-amino-acid chain; its full sequence is Early nodulin-12A (110 aa).

Positions 1–24 (MASFFLSSLVLFLAALILVPQGLA) are cleaved as a signal peptide. Positions 31–110 (VYEPPVNGPP…HPTEEHNIHF (80 aa)) are disordered. Residues 32–43 (YEPPVNGPPVNK) are compositionally biased toward pro residues. 3 tandem repeats follow at residues 34 to 38 (PPVNG), 39 to 43 (PPVNK), and 44 to 48 (PPQKE). The segment at 34–88 (PPVNGPPVNKPPQKETPVHKPPQKETPVHKPPQKEPPRHKPPQKEPPRHKPPHKK) is 11 X 5 AA approximate tandem repeats of P-P-[VQRH]-[NKH]-[GKE]. The segment covering 45–81 (PQKETPVHKPPQKETPVHKPPQKEPPRHKPPQKEPPR) has biased composition (basic and acidic residues). The stretch at 49-53 (TPVHK) is one 4; approximate repeat. Residues 54 to 58 (PPQKE) form repeat 5. Residues 59 to 63 (TPVHK) form a 6; approximate repeat. A run of 5 repeats spans residues 64 to 68 (PPQKE), 69 to 73 (PPRHK), 74 to 78 (PPQKE), 79 to 83 (PPRHK), and 84 to 88 (PPHKK). Positions 82 to 93 (HKPPHKKSHLHV) are enriched in basic residues. The segment covering 101 to 110 (HPTEEHNIHF) has biased composition (basic and acidic residues).

It belongs to the plant proline-rich protein superfamily. ENOD12 family. Root nodules, stem and flower.

The protein resides in the secreted. It localises to the cell wall. Involved in the infection process during the plant-rhizobium interaction. The sequence is that of Early nodulin-12A (ENOD12A) from Pisum sativum (Garden pea).